A 710-amino-acid chain; its full sequence is Ephexin-1 (710 aa).

Residues Met1–Ser20 are compositionally biased toward basic and acidic residues. The interval Met1 to Asp146 is disordered. Positions Met1–Ile272 are regulatory region; modulates activity toward RHOA, RAC1 and CDC42. Over residues Gln123 to Thr137 the composition is skewed to polar residues. Residue Tyr177 is modified to Phosphotyrosine. A disordered region spans residues Arg192–Arg234. Residues Asp211–Leu227 are compositionally biased toward acidic residues. Residues Arg273 to Gly457 enclose the DH domain. Residues Trp489 to Arg601 enclose the PH domain. The region spanning Leu612–Asn673 is the SH3 domain. Residues His688 to Lys699 are compositionally biased toward basic and acidic residues. Residues His688–Gln710 are disordered. Residues Asp700 to Gln710 are compositionally biased toward basic residues.

In terms of assembly, interacts with CDK5R1 and EPHA4; activated by EPHA4 through the CDK5 kinase. In terms of processing, src-dependent phosphorylation at Tyr-177 upon EPHA4 activation increases the guanine exchange factor activity toward RHOA. Phosphorylation by CDK5 upon EPHA4 activation by EFNA1 may regulate dendritic spine morphogenesis. Highly expressed in brain and to a lower extent in eye.

It localises to the cytoplasm. It is found in the membrane. The protein resides in the cell projection. The protein localises to the growth cone. Functionally, acts as a guanine nucleotide exchange factor (GEF) which differentially activates the GTPases RHOA, RAC1 and CDC42. Plays a role in axon guidance regulating ephrin-induced growth cone collapse and dendritic spine morphogenesis. Upon activation by ephrin through EPHA4, the GEF activity switches toward RHOA resulting in its activation. Activated RHOA promotes cone retraction at the expense of RAC1- and CDC42-stimulated growth cone extension. In Mus musculus (Mouse), this protein is Ephexin-1 (Ngef).